The primary structure comprises 534 residues: EH domain-containing protein 1 (534 aa).

Methionine 1 bears the N-acetylmethionine mark. Residues 55-286 (FDNKPMVLLV…DLFKDIQSLP (232 aa)) form the Dynamin-type G domain. A G1 motif region spans residues 65 to 72 (GQYSTGKT). 65–72 (GQYSTGKT) lines the ATP pocket. The G2 motif stretch occupies residues 91 to 92 (EP). The segment at 153–156 (DTPG) is G3 motif. A coiled-coil region spans residues 198–227 (DEFSEVIKALKNHEDKIRVVLNKADQIETQ). A G4 motif region spans residues 219 to 222 (NKAD). Residue lysine 220 participates in ATP binding. Residue isoleucine 243 is a region of interest, G5 motif. An ATP-binding site is contributed by tryptophan 258. 2 positions are modified to phosphoserine: serine 355 and serine 456. Residues 444–532 (DKPTYDEIFY…PHLVPPSKRR (89 aa)) form the EH domain. The region spanning 476-511 (LPNTVLGKIWKLADVDKDGLLDDEEFALANHLIKVK) is the EF-hand domain. Ca(2+) is bound by residues aspartate 489, aspartate 491, aspartate 493, and glutamate 500.

Belongs to the TRAFAC class dynamin-like GTPase superfamily. Dynamin/Fzo/YdjA family. EHD subfamily. In terms of assembly, homooligomer, and heterooligomer with EHD2, EHD3 and EHD4, ATP-binding is required for heterooligomerization. Interacts (via EH domain) with MICALL1 (via NPF1 motif); the interaction is direct and recruits EHD1 to membranes. Interacts with RAB35; the interaction is indirect through MICALL1 and recruits EHD1 to membranes. Interacts (via EH domain) with PACSIN2 (via NPF motifs); regulates localization to tubular recycling endosome membranes. Interacts with PACSIN1. Interacts with RAB8A. Interacts with FER1L5 (via second C2 domain). Interacts with MYOF. Interacts with ZFYVE20. Interacts (via EH domain) with RAB11FIP2.

It localises to the recycling endosome membrane. The protein resides in the early endosome membrane. Its subcellular location is the cell membrane. It is found in the cell projection. The protein localises to the cilium membrane. Functionally, ATP- and membrane-binding protein that controls membrane reorganization/tubulation upon ATP hydrolysis. Acts in early endocytic membrane fusion and membrane trafficking of recycling endosomes. Recruited to endosomal membranes upon nerve growth factor stimulation, indirectly regulates neurite outgrowth. Plays a role in myoblast fusion. Involved in the unidirectional retrograde dendritic transport of endocytosed BACE1 and in efficient sorting of BACE1 to axons implicating a function in neuronal APP processing. Plays a role in the formation of the ciliary vesicle (CV), an early step in cilium biogenesis. Proposed to be required for the fusion of distal appendage vesicles (DAVs) to form the CV by recruiting SNARE complex component SNAP29. Is required for recruitment of transition zone proteins CEP290, RPGRIP1L, TMEM67 and B9D2, and of IFT20 following DAV reorganization before Rab8-dependent ciliary membrane extension. Required for the loss of CCP110 form the mother centriole essential for the maturation of the basal body during ciliogenesis. The protein is EH domain-containing protein 1 of Pongo abelii (Sumatran orangutan).